The chain runs to 88 residues: N-alpha-acetyltransferase 38, NatC auxiliary subunit (88 aa).

A Sm domain is found at 1–72; sequence MDILKLSDFI…VKTIMIDKPV (72 aa).

As to quaternary structure, component of the N-terminal acetyltransferase C (NatC) complex, composed of the catalytic subunit Naa30/MAK3, a large auxiliary subunit Naa35/MAK10 and a small auxiliary subunit Naa38/MAK31.

In terms of biological role, component of the NatC N-terminal acetyltransferase, which associates with the ribosome to acetylate nascent protein chains in a cotranslational manner. NatC acetylates protein N-termini starting with methionine, followed by a hydrophobic or amphipathic amino acid, with amino acids at positions 3 and 4 also contributing to NatC recognition. The first 4 amino acids of cognate substrates are recognized at the Naa30/MAK3-Naa35/MAK10 interface. NatC-dependent acetylation targets various substrate proteins to specific subcellular sites, including isoform 2 of tRNA-specific methyltransferase Trm1 to the inner nuclear membrane. Catalyzes the acetylation of the N-terminal Met of ARF-like GTPase ARL3, which is required for its Golgi localization via interaction with the Golgi-localized integral membrane protein SYS1, which may serve as a receptor for acetylated ARL3. Catalyzes the acetylation of the N-terminal Met of L-A virus Gag protein. MAK31 is necessary for the structural stability of L-A double-stranded RNA-containing particles. Necessary for growth at 37 degrees Celsius as well as for maintenance of the killer plasmid. The protein is N-alpha-acetyltransferase 38, NatC auxiliary subunit (MAK31) of Saccharomyces cerevisiae (strain ATCC 204508 / S288c) (Baker's yeast).